The sequence spans 247 residues: GTP cyclohydrolase 1 type 2 homolog (247 aa).

His63, His64, Asp101, His215, and Glu219 together coordinate a divalent metal cation.

Belongs to the GTP cyclohydrolase I type 2/NIF3 family. In terms of assembly, homohexamer.

The sequence is that of GTP cyclohydrolase 1 type 2 homolog from Buchnera aphidicola subsp. Schizaphis graminum (strain Sg).